The chain runs to 422 residues: Adenylosuccinate synthetase (422 aa).

GTP-binding positions include 11–17 (GDEGKGK) and 39–41 (GHT). Asp-12 functions as the Proton acceptor in the catalytic mechanism. Positions 12 and 39 each coordinate Mg(2+). IMP-binding positions include 12–15 (DEGK), 37–40 (NAGH), Thr-129, Arg-143, Asn-219, Thr-234, and Arg-298. The active-site Proton donor is the His-40. Substrate is bound at residue 294 to 300 (VTTGRRR). Residues Arg-300, 326–328 (KLD), and 409–411 (GTG) contribute to the GTP site.

This sequence belongs to the adenylosuccinate synthetase family. In terms of assembly, homodimer. Mg(2+) is required as a cofactor.

It localises to the cytoplasm. The enzyme catalyses IMP + L-aspartate + GTP = N(6)-(1,2-dicarboxyethyl)-AMP + GDP + phosphate + 2 H(+). The protein operates within purine metabolism; AMP biosynthesis via de novo pathway; AMP from IMP: step 1/2. Functionally, plays an important role in the de novo pathway and in the salvage pathway of purine nucleotide biosynthesis. Catalyzes the first committed step in the biosynthesis of AMP from IMP. This is Adenylosuccinate synthetase from Ajellomyces capsulatus (strain NAm1 / WU24) (Darling's disease fungus).